The sequence spans 468 residues: RuvB-like helicase 2 (468 aa).

Position 76 to 83 (76 to 83) interacts with ATP; sequence GPPSTGKT.

This sequence belongs to the RuvB family. In terms of assembly, may form heterododecamers with RVB1. Component of the SWR1 chromatin remodeling complex, the INO80 chromatin remodeling complex, and of the R2TP complex.

It localises to the nucleus. It catalyses the reaction ATP + H2O = ADP + phosphate + H(+). DNA helicase which participates in several chromatin remodeling complexes, including the SWR1 and the INO80 complexes. The SWR1 complex mediates the ATP-dependent exchange of histone H2A for the H2A variant HZT1 leading to transcriptional regulation of selected genes by chromatin remodeling. The INO80 complex remodels chromatin by shifting nucleosomes and is involved in DNA repair. Also involved in pre-rRNA processing. In Emericella nidulans (strain FGSC A4 / ATCC 38163 / CBS 112.46 / NRRL 194 / M139) (Aspergillus nidulans), this protein is RuvB-like helicase 2 (rvb2).